Consider the following 103-residue polypeptide: MVRYRMRSLSERPHEVHGQQVHGQDQGHNGQEEQGLNPEHVEVYERTHRGHSHHRRRRCSRRRLHRIHRRRHRSCRRRRRRSCRHRRRHRRGCRTRRRRCRRH.

The interval 1-103 (MVRYRMRSLS…RTRRRRCRRH (103 aa)) is disordered. A phosphoserine mark is found at S8 and S10. Residues 8-17 (SLSERPHEVH) show a composition bias toward basic and acidic residues. The segment covering 18–29 (GQQVHGQDQGHN) has biased composition (low complexity). A compositionally biased stretch (basic residues) spans 48-103 (HRGHSHHRRRRCSRRRLHRIHRRRHRSCRRRRRRSCRHRRRHRRGCRTRRRRCRRH).

This sequence belongs to the protamine P2 family. Interacts with TDRP. Proteolytic processing into mature chains is required for histone eviction during spermatogenesis. Transition proteins (TNP1 and TNP2) are required for processing. As to expression, testis.

It localises to the nucleus. Its subcellular location is the chromosome. In terms of biological role, protamines substitute for histones in the chromatin of sperm during the haploid phase of spermatogenesis. They compact sperm DNA into a highly condensed, stable and inactive complex. This chain is Protamine-2 (PRM2), found in Macaca nemestrina (Pig-tailed macaque).